Consider the following 180-residue polypeptide: Cytokinin-beta-glucosidase 1 (180 aa).

Its function is as follows. Hydrolyzes cytokinin glucosides thus liberating free cytokinins. This Linaria vulgaris (Toadflax) protein is Cytokinin-beta-glucosidase 1 (ROLC1).